Consider the following 203-residue polypeptide: Vexin (203 aa).

A compositionally biased stretch (basic and acidic residues) spans 59 to 70 (HRTDRRDGEGRW). The interval 59 to 101 (HRTDRRDGEGRWSGRFQNPRLQGPHPAKTPARPVGTSEPKSAN) is disordered.

Belongs to the vexin family.

It localises to the cell membrane. Its subcellular location is the nucleus. Functionally, required for neurogenesis in the neural plate and retina. Strongly cooperates with neural bHLH factors to promote neurogenesis. This is Vexin from Bos taurus (Bovine).